Here is a 214-residue protein sequence, read N- to C-terminus: uncharacterized protein (214 aa).

7 consecutive transmembrane segments (helical) span residues 4–23 (VSIVEIFLIISLPLLFFSSF), 35–57 (SFVHGAVLAVPLLLLRSFFLGYY), 67–89 (QWMRFFLFDYVFPLFCLPFFLFT), 96–118 (VSLVSGVSALFGAYTSFFFVHVY), 128–150 (ARVMTLVLYMTNLLQLHAHVSFS), 155–177 (LPLLGLIAALCIFLLMGAFSATV), and 187–209 (TVVYTSMLAGAGGVALLTHFFAV).

It localises to the cell membrane. This is an uncharacterized protein from Treponema pallidum (strain Nichols).